Consider the following 251-residue polypeptide: Small ribosomal subunit protein uS2 (251 aa).

The protein belongs to the universal ribosomal protein uS2 family.

This Cereibacter sphaeroides (strain ATCC 17029 / ATH 2.4.9) (Rhodobacter sphaeroides) protein is Small ribosomal subunit protein uS2.